A 162-amino-acid polypeptide reads, in one-letter code: UPF0262 protein Pden_1958 (162 aa).

The interval 1–22 (MSQSANRLCRIDIDDSALPPPS) is disordered.

It belongs to the UPF0262 family.

This is UPF0262 protein Pden_1958 from Paracoccus denitrificans (strain Pd 1222).